Here is a 30-residue protein sequence, read N- to C-terminus: Beta-endorphin-2 (30 aa).

Position 1 is an N-acetyltyrosine (tyrosine 1).

The protein belongs to the POMC family.

It is found in the secreted. This Oncorhynchus keta (Chum salmon) protein is Beta-endorphin-2.